The following is a 307-amino-acid chain: tRNA dimethylallyltransferase 2 (307 aa).

11–18 (GPTASGKT) contacts ATP. 13-18 (TASGKT) provides a ligand contact to substrate. Residues 36-39 (DSRQ) are interaction with substrate tRNA.

Belongs to the IPP transferase family. Monomer. It depends on Mg(2+) as a cofactor.

It carries out the reaction adenosine(37) in tRNA + dimethylallyl diphosphate = N(6)-dimethylallyladenosine(37) in tRNA + diphosphate. Its function is as follows. Catalyzes the transfer of a dimethylallyl group onto the adenine at position 37 in tRNAs that read codons beginning with uridine, leading to the formation of N6-(dimethylallyl)adenosine (i(6)A). The sequence is that of tRNA dimethylallyltransferase 2 from Phocaeicola vulgatus (strain ATCC 8482 / DSM 1447 / JCM 5826 / CCUG 4940 / NBRC 14291 / NCTC 11154) (Bacteroides vulgatus).